Here is a 361-residue protein sequence, read N- to C-terminus: tRNA/tmRNA (uracil-C(5))-methyltransferase (361 aa).

Positions 185, 213, 218, 234, and 294 each coordinate S-adenosyl-L-methionine. Cysteine 319 functions as the Nucleophile in the catalytic mechanism. Glutamate 353 (proton acceptor) is an active-site residue.

This sequence belongs to the class I-like SAM-binding methyltransferase superfamily. RNA M5U methyltransferase family. TrmA subfamily.

The catalysed reaction is uridine(54) in tRNA + S-adenosyl-L-methionine = 5-methyluridine(54) in tRNA + S-adenosyl-L-homocysteine + H(+). It carries out the reaction uridine(341) in tmRNA + S-adenosyl-L-methionine = 5-methyluridine(341) in tmRNA + S-adenosyl-L-homocysteine + H(+). Its function is as follows. Dual-specificity methyltransferase that catalyzes the formation of 5-methyluridine at position 54 (m5U54) in all tRNAs, and that of position 341 (m5U341) in tmRNA (transfer-mRNA). This chain is tRNA/tmRNA (uracil-C(5))-methyltransferase, found in Azotobacter vinelandii (strain DJ / ATCC BAA-1303).